The following is a 79-amino-acid chain: Sec-independent protein translocase protein TatA (79 aa).

Residues 1–21 (MGEFSLTHILLLAVIFLIFFG) form a helical membrane-spanning segment. The interval 52–79 (DIHDNQQVSHQNKQSMGQTQKQGENQNS) is disordered. A compositionally biased stretch (polar residues) spans 56–79 (NQQVSHQNKQSMGQTQKQGENQNS).

The protein belongs to the TatA/E family. As to quaternary structure, the Tat system comprises two distinct complexes: a TatABC complex, containing multiple copies of TatA, TatB and TatC subunits, and a separate TatA complex, containing only TatA subunits. Substrates initially bind to the TatABC complex, which probably triggers association of the separate TatA complex to form the active translocon.

Its subcellular location is the cell inner membrane. Part of the twin-arginine translocation (Tat) system that transports large folded proteins containing a characteristic twin-arginine motif in their signal peptide across membranes. TatA could form the protein-conducting channel of the Tat system. This chain is Sec-independent protein translocase protein TatA, found in Bdellovibrio bacteriovorus (strain ATCC 15356 / DSM 50701 / NCIMB 9529 / HD100).